The following is a 230-amino-acid chain: Probable GTP-binding protein EngB (230 aa).

The EngB-type G domain maps to 36–224; the sequence is ERPKVIVMGR…KHRINKRINI (189 aa). Residues 44 to 51, 69 to 73, 86 to 89, 166 to 169, and 201 to 203 contribute to the GTP site; these read GRSNVGKS, GVTLK, DLPG, NKMD, and VPA. The Mg(2+) site is built by Ser-51 and Thr-71.

This sequence belongs to the TRAFAC class TrmE-Era-EngA-EngB-Septin-like GTPase superfamily. EngB GTPase family. The cofactor is Mg(2+).

In terms of biological role, necessary for normal cell division and for the maintenance of normal septation. The sequence is that of Probable GTP-binding protein EngB from Methanococcus maripaludis (strain DSM 14266 / JCM 13030 / NBRC 101832 / S2 / LL).